The following is a 312-amino-acid chain: MDIIFYHPTFDTQWWIEALHKAIPQARVRAWKSGDNESADYALVWHPPVEMLAGRDLKAVFALGAGVDSILSKLQAHPEMLKPSVPLFRLEDTGMGEQMQEYAVSQVLHWFRRFDDYRIQQNSSHWQPLPEYHREDFTIGILGAGVLGSKVAQSLQTWRFPLRCWSRTRKSWPGLQSFAGREELSAFLSQCRVLINLLPNTPETVGIINQQLLEKLPDGAYLLNLARGVHVVEDDLLAALDSGKVKGAMLDVFNREPLPPESPLWQHPRVTITPHVAAITRPAEAVDYISRTIAQLEKGERVCGQVDRARGY.

The active site involves arginine 227. The Proton donor role is filled by histidine 275.

This sequence belongs to the D-isomer specific 2-hydroxyacid dehydrogenase family. GhrA subfamily.

The protein resides in the cytoplasm. The catalysed reaction is glycolate + NADP(+) = glyoxylate + NADPH + H(+). The enzyme catalyses (R)-glycerate + NAD(+) = 3-hydroxypyruvate + NADH + H(+). It catalyses the reaction (R)-glycerate + NADP(+) = 3-hydroxypyruvate + NADPH + H(+). Its function is as follows. Catalyzes the NADPH-dependent reduction of glyoxylate and hydroxypyruvate into glycolate and glycerate, respectively. This chain is Glyoxylate/hydroxypyruvate reductase A, found in Escherichia coli O81 (strain ED1a).